A 249-amino-acid chain; its full sequence is Coproheme decarboxylase (249 aa).

Residues arginine 131, tyrosine 145–lysine 149, histidine 172, glutamine 185, and serine 223 contribute to the Fe-coproporphyrin III site. Tyrosine 145 is a catalytic residue.

Belongs to the ChdC family. Type 1 subfamily. The cofactor is Fe-coproporphyrin III.

It catalyses the reaction Fe-coproporphyrin III + 2 H2O2 + 2 H(+) = heme b + 2 CO2 + 4 H2O. The enzyme catalyses Fe-coproporphyrin III + H2O2 + H(+) = harderoheme III + CO2 + 2 H2O. The catalysed reaction is harderoheme III + H2O2 + H(+) = heme b + CO2 + 2 H2O. The protein operates within porphyrin-containing compound metabolism; protoheme biosynthesis. Involved in coproporphyrin-dependent heme b biosynthesis. Catalyzes the decarboxylation of Fe-coproporphyrin III (coproheme) to heme b (protoheme IX), the last step of the pathway. The reaction occurs in a stepwise manner with a three-propionate intermediate. The chain is Coproheme decarboxylase from Shouchella clausii (strain KSM-K16) (Alkalihalobacillus clausii).